We begin with the raw amino-acid sequence, 508 residues long: MISPGFSHFTELAQQGNFIPVYQEWVADLETPVSAWYKVCSSQPYNFLLESVEGGESIGRYSFLGCDPMWVLEARGDETTQVLRNGQTETFRGNPLDILSQCLESIRPVNLPQLPPGIGGLFGVWGYELIRWMEPRVPVYEPQPEDPPDGIWMQVDHLLIFDQVKRKIWAIAFADLRGENVDLETAYRNACQRVTKLVLQLQLPLPPEATALELLTKTQLEGKELNYSSNTEQEKFLEEVAIAKDYITAGDIFQVVLSQRLSTIYRDDPFKLYRSLRLINPSPYMAYYNFGHWQIIGSSPEVMVKADRQLDGKLMATVRPIAGTRPRGKTHPEDEQLAEELLNDPKEIAEHVMLVDLGRNDLGRVCVQGSVKVNELMVIERYSHVMHIVSNVVGELASDKTAWDLLKACFPAGTVSGAPKIRAMEIINELEPERRGPYSGVYGYYDFEGQLNTAIAIRTMVVQEQPDGAHRVSVQTGAGIVADSDPQKEYEETLNKARGLLEAIRALS.

Residues S51 and P283–M285 contribute to the L-tryptophan site. G323–T324 contributes to the chorismate binding site. E350 is a binding site for Mg(2+). Chorismate is bound by residues Y438, R458, G477 to G479, and G479. E492 provides a ligand contact to Mg(2+).

Belongs to the anthranilate synthase component I family. As to quaternary structure, heterotetramer consisting of two non-identical subunits: a beta subunit (TrpG) and a large alpha subunit (TrpE). The cofactor is Mg(2+).

It catalyses the reaction chorismate + L-glutamine = anthranilate + pyruvate + L-glutamate + H(+). The protein operates within amino-acid biosynthesis; L-tryptophan biosynthesis; L-tryptophan from chorismate: step 1/5. With respect to regulation, feedback inhibited by tryptophan. In terms of biological role, part of a heterotetrameric complex that catalyzes the two-step biosynthesis of anthranilate, an intermediate in the biosynthesis of L-tryptophan. In the first step, the glutamine-binding beta subunit (TrpG) of anthranilate synthase (AS) provides the glutamine amidotransferase activity which generates ammonia as a substrate that, along with chorismate, is used in the second step, catalyzed by the large alpha subunit of AS (TrpE) to produce anthranilate. In the absence of TrpG, TrpE can synthesize anthranilate directly from chorismate and high concentrations of ammonia. This chain is Anthranilate synthase component 1 (trpE), found in Synechocystis sp. (strain ATCC 27184 / PCC 6803 / Kazusa).